Consider the following 160-residue polypeptide: Putative tRNA (cytidine(34)-2'-O)-methyltransferase (160 aa).

The S-adenosyl-L-methionine site is built by Ile-82, Gly-107, Leu-128, and Ser-136.

It belongs to the class IV-like SAM-binding methyltransferase superfamily. RNA methyltransferase TrmH family. TrmL subfamily.

Its subcellular location is the cytoplasm. The catalysed reaction is cytidine(34) in tRNA + S-adenosyl-L-methionine = 2'-O-methylcytidine(34) in tRNA + S-adenosyl-L-homocysteine + H(+). It carries out the reaction 5-carboxymethylaminomethyluridine(34) in tRNA(Leu) + S-adenosyl-L-methionine = 5-carboxymethylaminomethyl-2'-O-methyluridine(34) in tRNA(Leu) + S-adenosyl-L-homocysteine + H(+). Its function is as follows. Could methylate the ribose at the nucleotide 34 wobble position in tRNA. The chain is Putative tRNA (cytidine(34)-2'-O)-methyltransferase (cspR) from Bacillus subtilis (strain 168).